The sequence spans 385 residues: UPF0496 protein At3g28290 (385 aa).

Residues 138-214 (KDKENDVGKK…IEMEISSRKK (77 aa)) adopt a coiled-coil conformation. Helical transmembrane passes span 217-237 (IISN…SMVL) and 242-262 (VGAG…IGWV). A coiled-coil region spans residues 267–294 (ILENKIQAREKQEEALKKAHRIANEMDK).

Belongs to the UPF0496 family. In terms of tissue distribution, widely expressed.

Its subcellular location is the membrane. This is UPF0496 protein At3g28290 from Arabidopsis thaliana (Mouse-ear cress).